Here is a 132-residue protein sequence, read N- to C-terminus: Heat shock protein 15 homolog (132 aa).

The S4 RNA-binding domain maps to 11 to 73; the sequence is VRLDKWLWAA…DEREVRVLQV (63 aa). 2 stretches are compositionally biased toward basic and acidic residues: residues 94–105 and 114–125; these read LKKRAENSEARR and PERRPDKQERRQ. Residues 94–132 are disordered; that stretch reads LKKRAENSEARRFNSQFAPSPERRPDKQERRQLIKVKQY.

This sequence belongs to the HSP15 family.

In terms of biological role, may play an important role in binding of nucleic acid. More specific for RNA. The chain is Heat shock protein 15 homolog (hslR) from Aeromonas salmonicida.